We begin with the raw amino-acid sequence, 326 residues long: MSTEDALCFTGEEYARHVREYWRGVAESDGFDSEDIRSPVVLTGLFHYDCQSGRRYPDPLLVKRYALLGLHRFNILQGTSFELDALQKFNKTMNLTSSYYITLLANEPGAIPLQKTFQVRVDERKYDTLDLTVAIARLKKDQNEAAETTKEPFVPHFCCSAVSDGVFQGPLPDWPSDDALRHDRNRFYELEKSEWQATDWISLYLELLILATDRGMFGVAQTGLPQVQILKVVIETEEENEKPLDKRLNARRAHVYITFTGLPKSPRLVEIGEHVERKAIIRRVIDDSGYLTLLGKFWSGKDTEQRSKTRQSEEKVESSQKRSRLC.

Over residues 301–320 (KDTEQRSKTRQSEEKVESSQ) the composition is skewed to basic and acidic residues. Positions 301–326 (KDTEQRSKTRQSEEKVESSQKRSRLC) are disordered.

This sequence belongs to the UPF0725 (EMB2204) family.

The polypeptide is Putative UPF0725 protein At1g28500 (Arabidopsis thaliana (Mouse-ear cress)).